A 325-amino-acid polypeptide reads, in one-letter code: DNA-directed RNA polymerase subunit alpha (325 aa).

The tract at residues 1–231 is alpha N-terminal domain (alpha-NTD); the sequence is MQTSLLKPKI…DQLSVFAALE (231 aa). The tract at residues 246-325 is alpha C-terminal domain (alpha-CTD); that stretch reads IDPILLRPVD…ENWPPAGLDK (80 aa).

The protein belongs to the RNA polymerase alpha chain family. Homodimer. The RNAP catalytic core consists of 2 alpha, 1 beta, 1 beta' and 1 omega subunit. When a sigma factor is associated with the core the holoenzyme is formed, which can initiate transcription.

The catalysed reaction is RNA(n) + a ribonucleoside 5'-triphosphate = RNA(n+1) + diphosphate. Its function is as follows. DNA-dependent RNA polymerase catalyzes the transcription of DNA into RNA using the four ribonucleoside triphosphates as substrates. The sequence is that of DNA-directed RNA polymerase subunit alpha from Burkholderia thailandensis (strain ATCC 700388 / DSM 13276 / CCUG 48851 / CIP 106301 / E264).